The sequence spans 492 residues: Bifunctional purine biosynthesis protein PurH (492 aa).

Positions 1 to 144 (MKKAILSVSN…KNYKHVTTIV (144 aa)) constitute an MGS-like domain.

Belongs to the PurH family.

It catalyses the reaction (6R)-10-formyltetrahydrofolate + 5-amino-1-(5-phospho-beta-D-ribosyl)imidazole-4-carboxamide = 5-formamido-1-(5-phospho-D-ribosyl)imidazole-4-carboxamide + (6S)-5,6,7,8-tetrahydrofolate. The catalysed reaction is IMP + H2O = 5-formamido-1-(5-phospho-D-ribosyl)imidazole-4-carboxamide. It participates in purine metabolism; IMP biosynthesis via de novo pathway; 5-formamido-1-(5-phospho-D-ribosyl)imidazole-4-carboxamide from 5-amino-1-(5-phospho-D-ribosyl)imidazole-4-carboxamide (10-formyl THF route): step 1/1. Its pathway is purine metabolism; IMP biosynthesis via de novo pathway; IMP from 5-formamido-1-(5-phospho-D-ribosyl)imidazole-4-carboxamide: step 1/1. This chain is Bifunctional purine biosynthesis protein PurH, found in Staphylococcus aureus (strain MRSA252).